The chain runs to 580 residues: Serine/threonine-protein kinase PINK1, mitochondrial (580 aa).

The N-terminal 77 residues, methionine 1 to leucine 77, are a transit peptide targeting the mitochondrion. Residues valine 28 to glycine 60 are disordered. The helical transmembrane segment at glycine 94–leucine 110 threads the bilayer. The interval isoleucine 111–glutamate 117 is required for outer membrane localization. In terms of domain architecture, Protein kinase spans tyrosine 156–leucine 510. ATP is bound by residues isoleucine 162–valine 170 and lysine 218. Serine 227 carries the post-translational modification Phosphoserine; by autocatalysis. Aspartate 361 (proton acceptor) is an active-site residue. Phosphoserine; by autocatalysis is present on serine 401.

It belongs to the protein kinase superfamily. Ser/Thr protein kinase family. In terms of assembly, upon mitochondrial depolarization, it forms a supercomplex with TOM and TIM23 complexes. PINK1-TOM-TIM23 supercomplex formation requires PINK1 interaction with TOMM20 and TOMM70 and is critical for PINK1 stabilization at the outer mitochondrial membrane, kinase activation and downstream mitophagy. Upon mitochondrial depolarization, interacts with TIMM23; the interaction is required for PINK1 accumulation at the outer mitochondrial membrane, kinase activation by autophosphorylation and PRKN recruitement to mitochondria. Interacts with PRKN. Interacts with FBXO7. Forms a complex with PRKN and PARK7. Interacts with NENF. Mg(2+) serves as cofactor. Proteolytically cleaved. In healthy cells, the precursor is continuously imported into the inner mitochondrial membrane (IMM), where it is proteolytically cleaved by mitochondrial-processing peptidase (MPP) and then undergoes further proteolytic cleavage by PARL or AFG3L2 to give rise to the 52 kDa short form. The 52 kDa short form is then released into the cytosol where it rapidly undergoes proteasome-dependent degradation. In unhealthy cells, when cellular stress conditions lead to the loss of mitochondrial membrane potential, mitochondrial import is impaired leading to the precursor accumulating on the outer mitochondrial membrane (OMM). If accumulation at the OMM fails and it is imported into the depolarized mitochondria, it undergoes cleavage by the IMM protease OMA1, promoting its subsequent degradation by the proteasome. Post-translationally, autophosphorylated. Loss of mitochondrial membrane potential results in the precursor accumulating on the outer mitochondrial membrane (OMM) where it is activated by autophosphorylation. Autophosphorylation at Ser-227 and Ser-401 is sufficient and essential for selective recruitment of PRKN to depolarized mitochondria, via PINK1-dependent phosphorylation of ubiquitin and maybe PRKN.

Its subcellular location is the mitochondrion outer membrane. The protein localises to the mitochondrion inner membrane. It localises to the cytoplasm. It is found in the cytosol. It carries out the reaction L-seryl-[protein] + ATP = O-phospho-L-seryl-[protein] + ADP + H(+). The enzyme catalyses L-threonyl-[protein] + ATP = O-phospho-L-threonyl-[protein] + ADP + H(+). In terms of biological role, serine/threonine-protein kinase which acts as a sensor of mitochondrial damage and protects against mitochondrial dysfunction during cellular stress. It phosphorylates mitochondrial proteins to coordinate mitochondrial quality control mechanisms that remove and replace dysfunctional mitochondrial components. Depending on the severity of mitochondrial damage, activity ranges from preventing apoptosis and stimulating mitochondrial biogenesis to eliminating severely damaged mitochondria via PINK1-PRKN-dependent mitophagy. When cellular stress results in irreversible mitochondrial damage, PINK1 accumulates at the outer mitochondrial membrane (OMM) where it phosphorylates pre-existing polyubiquitin chains at 'Ser-65', recruits PRKN from the cytosol to the OMM and activates PRKN by phosphorylation at 'Ser-65'; activated PRKN then ubiquinates VDAC1 and other OMM proteins to initiate mitophagy. The PINK1-PRKN pathway also promotes fission of damaged mitochondria through phosphorylation and PRKN-dependent degradation of mitochondrial proteins involved in fission such as MFN2. This prevents the refusion of unhealthy mitochondria with the mitochondrial network or initiates mitochondrial fragmentation facilitating their later engulfment by autophagosomes. Also promotes mitochondrial fission independently of PRKN and ATG7-mediated mitophagy, via the phosphorylation and activation of DNM1L. Regulates motility of damaged mitochondria by promoting the ubiquitination and subsequent degradation of MIRO1 and MIRO2; in motor neurons, this likely inhibits mitochondrial intracellular anterograde transport along the axons which probably increases the chance of the mitochondria undergoing mitophagy in the soma. Required for ubiquinone reduction by mitochondrial complex I by mediating phosphorylation of complex I subunit NDUFA10. Phosphorylates LETM1, positively regulating its mitochondrial calcium transport activity. In Rattus norvegicus (Rat), this protein is Serine/threonine-protein kinase PINK1, mitochondrial.